Consider the following 376-residue polypeptide: Transforming growth factor beta-1 proprotein (376 aa).

Positions 1 to 22 (MRVESLLLALQCLLGFVHYSGA) are cleaved as a signal peptide. The tract at residues 23–68 (LSTCSPLDLELIKRKRIEAIRGQILSKLRLSKEPEVDEEKESQNIP) is straightjacket domain. The arm domain stretch occupies residues 69–258 (AELISVYNST…SLPLDGNNSS (190 aa)). N-linked (GlcNAc...) asparagine glycosylation is found at Asn76, Asn125, and Asn167. The tract at residues 214-238 (DPQKTFQLKIPGLVLVRGDTETLAV) is bowtie tail. Positions 230-232 (RGD) match the Cell attachment site motif. 3 disulfide bridges follow: Cys272-Cys280, Cys308-Cys373, and Cys312-Cys375.

This sequence belongs to the TGF-beta family. In terms of assembly, latency-associated peptide: Homodimer; disulfide-linked. Latency-associated peptide: Interacts with Transforming growth factor beta-1 (TGF-beta-1) chain; interaction is non-covalent and maintains (TGF-beta-1) in a latent state; each Latency-associated peptide (LAP) monomer interacts with TGF-beta-1 in the other monomer. Transforming growth factor beta-1: Homodimer; disulfide-linked. Transforming growth factor beta-1: Interacts with TGF-beta receptors (tgfbr1 and tgfbr2), leading to signal transduction. Interacts with EFEMP2. Transforming growth factor beta-1 proprotein: The precursor proprotein is cleaved in the Golgi apparatus to form Transforming growth factor beta-1 (TGF-beta-1) and Latency-associated peptide (LAP) chains, which remain non-covalently linked, rendering TGF-beta-1 inactive.

The protein resides in the secreted. The protein localises to the extracellular space. It localises to the extracellular matrix. Functionally, transforming growth factor beta-1 proprotein: Precursor of the Latency-associated peptide (LAP) and Transforming growth factor beta-1 (TGF-beta-1) chains, which constitute the regulatory and active subunit of TGF-beta-1, respectively. In terms of biological role, required to maintain the Transforming growth factor beta-1 (TGF-beta-1) chain in a latent state during storage in extracellular matrix. Associates non-covalently with TGF-beta-1 and regulates its activation via interaction with 'milieu molecules', such as LTBP1, LRRC32/GARP and LRRC33/NRROS, that control activation of TGF-beta-1. Interaction with integrins (ITGAV:ITGB6 or ITGAV:ITGB8) results in distortion of the Latency-associated peptide chain and subsequent release of the active TGF-beta-1. Transforming growth factor beta-1: Multifunctional protein that regulates the growth and differentiation of various cell types and is involved in various processes, such as normal development, immune function, microglia function and responses to neurodegeneration. Activation into mature form follows different steps: following cleavage of the proprotein in the Golgi apparatus, Latency-associated peptide (LAP) and Transforming growth factor beta-1 (TGF-beta-1) chains remain non-covalently linked rendering TGF-beta-1 inactive during storage in extracellular matrix. At the same time, LAP chain interacts with 'milieu molecules', such as ltbp1, lrrc32/garp and lrrc33/nrros that control activation of TGF-beta-1 and maintain it in a latent state during storage in extracellular milieus. TGF-beta-1 is released from LAP by integrins (ITGAV:ITGB6 or ITGAV:ITGB8): integrin-binding to LAP stabilizes an alternative conformation of the LAP bowtie tail and results in distortion of the LAP chain and subsequent release of the active TGF-beta-1. Once activated following release of LAP, TGF-beta-1 acts by binding to TGF-beta receptors (tgfbr1 and tgfbr2), which transduce signal. While expressed by many cells types, TGF-beta-1 only has a very localized range of action within cell environment thanks to fine regulation of its activation by Latency-associated peptide chain (LAP) and 'milieu molecules'. Plays an important role in bone remodeling: acts as a potent stimulator of osteoblastic bone formation. Can promote either T-helper 17 cells (Th17) or regulatory T-cells (Treg) lineage differentiation in a concentration-dependent manner. Can induce epithelial-to-mesenchymal transition (EMT) and cell migration in various cell types. This is Transforming growth factor beta-1 proprotein (tgfb1) from Cyprinus carpio (Common carp).